A 600-amino-acid polypeptide reads, in one-letter code: CDK5RAP1-like protein (600 aa).

The interval 45–66 is disordered; sequence LSSAAHPPPPPPRRLARSGPSR. Positions 93-222 constitute an MTTase N-terminal domain; the sequence is GRIYHETYGC…LPRLLQEVDY (130 aa). Residues Cys102, Cys139, Cys185, Cys260, Cys264, and Cys267 each coordinate [4Fe-4S] cluster. A Radical SAM core domain is found at 246 to 501; the sequence is SDNSVTAFVS…ISTFRETTAK (256 aa). Residues 504–580 form the TRAM domain; it reads DSQVGTVQLV…TASLSGDVIA (77 aa).

Belongs to the methylthiotransferase family. MiaB subfamily. [4Fe-4S] cluster serves as cofactor.

In terms of biological role, potential regulator of CDK5 activity. The protein is CDK5RAP1-like protein of Oryza sativa subsp. japonica (Rice).